A 962-amino-acid polypeptide reads, in one-letter code: Glycine dehydrogenase (decarboxylating) (962 aa).

Lys-709 carries the post-translational modification N6-(pyridoxal phosphate)lysine.

The protein belongs to the GcvP family. The glycine cleavage system is composed of four proteins: P, T, L and H. Requires pyridoxal 5'-phosphate as cofactor.

The enzyme catalyses N(6)-[(R)-lipoyl]-L-lysyl-[glycine-cleavage complex H protein] + glycine + H(+) = N(6)-[(R)-S(8)-aminomethyldihydrolipoyl]-L-lysyl-[glycine-cleavage complex H protein] + CO2. Functionally, the glycine cleavage system catalyzes the degradation of glycine. The P protein binds the alpha-amino group of glycine through its pyridoxal phosphate cofactor; CO(2) is released and the remaining methylamine moiety is then transferred to the lipoamide cofactor of the H protein. The chain is Glycine dehydrogenase (decarboxylating) from Shewanella sp. (strain MR-7).